Reading from the N-terminus, the 30-residue chain is L-serine dehydratase, alpha chain (30 aa).

It belongs to the iron-sulfur dependent L-serine dehydratase family. As to quaternary structure, heterodimer of an alpha chain and a beta chain. Requires [4Fe-4S] cluster as cofactor.

It catalyses the reaction L-serine = pyruvate + NH4(+). The protein operates within carbohydrate biosynthesis; gluconeogenesis. This Anaerotignum propionicum (Clostridium propionicum) protein is L-serine dehydratase, alpha chain.